The following is a 307-amino-acid chain: Leucine-rich repeat-containing protein 59 (307 aa).

The residue at position 1 (Met-1) is an N-acetylmethionine. At Thr-2 the chain carries N-acetylthreonine; in Leucine-rich repeat-containing protein 59, N-terminally processed. Over 2–244 the chain is Cytoplasmic; the sequence is TKTGSKGGNL…KPPPRKHNRS (243 aa). LRR repeat units follow at residues 10–31, 40–62, 63–84, 86–107, and 109–128; these read NLRDKLDGNELDLSLSDLNEVP, KATVLDLSCNKLSTLPSDFCGLT, HLVKLDLSKNKLQQLPADFGRL, NLQHLDLLNNRLVTLPVSFAQL, and NLKWLDLKDNPLDPVLAKVA. 2 positions are modified to phosphoserine: Ser-23 and Ser-25. Lys-73 bears the N6-succinyllysine mark. Position 135 is an N6-acetyllysine (Lys-135). Residues 148-216 adopt a coiled-coil conformation; the sequence is MKAVQADQER…KASKREQEKK (69 aa). The interval 150-242 is disordered; the sequence is AVQADQERER…PRKPPPRKHN (93 aa). A compositionally biased stretch (basic and acidic residues) spans 154 to 221; sequence DQERERQRRL…EQEKKPKKET (68 aa). The span at 229–242 shows a compositional bias: basic residues; it reads SGSRPRKPPPRKHN. Residues 245–265 traverse the membrane as a helical segment; that stretch reads WAVLKGLLLLLLLCVAGGLVV. The Lumenal segment spans residues 266 to 307; that stretch reads CRVTGLQQQPLCTSVNAIYDNAVQGLRHHEILQWVLQTDSQQ.

As to quaternary structure, can form homodimers. Interacts with SGO1. Interacts with FGF1.

It is found in the microsome membrane. It localises to the endoplasmic reticulum membrane. The protein localises to the nucleus envelope. In terms of biological role, required for nuclear import of FGF1, but not that of FGF2. Might regulate nuclear import of exogenous FGF1 by facilitating interaction with the nuclear import machinery and by transporting cytosolic FGF1 to, and possibly through, the nuclear pores. This Rattus norvegicus (Rat) protein is Leucine-rich repeat-containing protein 59 (Lrrc59).